Consider the following 115-residue polypeptide: NADH-ubiquinone oxidoreductase chain 3 (115 aa).

A run of 3 helical transmembrane segments spans residues 4–24, 55–75, and 84–104; these read ALTL…AFWL, FFLV…LLPL, and LTTM…SLAY.

Belongs to the complex I subunit 3 family. As to quaternary structure, core subunit of respiratory chain NADH dehydrogenase (Complex I) which is composed of 45 different subunits. Interacts with TMEM186. Interacts with TMEM242.

It localises to the mitochondrion inner membrane. It carries out the reaction a ubiquinone + NADH + 5 H(+)(in) = a ubiquinol + NAD(+) + 4 H(+)(out). In terms of biological role, core subunit of the mitochondrial membrane respiratory chain NADH dehydrogenase (Complex I) which catalyzes electron transfer from NADH through the respiratory chain, using ubiquinone as an electron acceptor. Essential for the catalytic activity of complex I. The protein is NADH-ubiquinone oxidoreductase chain 3 of Phoca vitulina (Harbor seal).